We begin with the raw amino-acid sequence, 284 residues long: Expansin-A17 (284 aa).

An N-terminal signal peptide occupies residues 1–21 (MASSWNNPAIFLAAALAVATA). In terms of domain architecture, Expansin-like EG45 spans 71–185 (GGACGYVSND…RRVPCQRTGG (115 aa)). The region spanning 195–279 (YWLLLYVMNV…WWITGLCYQG (85 aa)) is the Expansin-like CBD domain.

This sequence belongs to the expansin family. Expansin A subfamily. As to expression, expressed in roots.

The protein localises to the secreted. Its subcellular location is the cell wall. The protein resides in the membrane. Functionally, may cause loosening and extension of plant cell walls by disrupting non-covalent bonding between cellulose microfibrils and matrix glucans. No enzymatic activity has been found. May be required for rapid internodal elongation in deepwater rice during submergence. This chain is Expansin-A17 (EXPA17), found in Oryza sativa subsp. japonica (Rice).